Consider the following 428-residue polypeptide: UPF0761 membrane protein Ppha_1623 (428 aa).

Transmembrane regions (helical) follow at residues 52 to 72 (LLSI…FVVF), 108 to 128 (SVPI…ISTV), 148 to 168 (FTLY…SLAA), 189 to 209 (LLSF…YMLV), 216 to 233 (FVHA…FELS), and 252 to 272 (GALS…IVVL).

The protein belongs to the UPF0761 family.

It localises to the cell inner membrane. This is UPF0761 membrane protein Ppha_1623 from Pelodictyon phaeoclathratiforme (strain DSM 5477 / BU-1).